The primary structure comprises 638 residues: MLEQIRGPADLQHLSQSALSELAGEIRQFLIHKVAATGGHLGPNLGVVELTLALHRVFDSPHDPLIFDTGHQAYVHKMLTGRSHEFDSLRKKDGLSGYPSRSESEHDWVESSHASAALSYADGLAKAFELTGHRNRHVVAVVGDGALTGGMCWEALNNIAAARRPVVIVVNDNGRSYAPTIGGFADHLAALRLQPGYERVLEEGRKAVRGLPVIGEFCYQCMHSVKAGIKDALSPQVMFTDLGLKYVGPIDGHDEHAVESALRHARGFNAPVIVHVVTRKGMGYAPAENDEAEQMHACGVIDVATGRATMVAAPGWTSSFSEALIDYGAKRRDIVAITAAMPGPTGLSAFRDRFPDRFFDVGIAEQHAMTSAAGLAMGGLHPVVAIYSTFLNRAFDQLMMDVALHKLPVTLVLDRSGVTGPDGASHNGMWDLSVLGIVPGMRVAAPRDGARLREELGEALDVNDAPTAIRFPKGDVGEDIPAVRRHRGVDVLAEPADGLSDDVLLVAVGPFASMALTVAERLRKQGIGVTVVDPRWVLPVPEVLTEFAAAHKLVVTVEDNGLHGGIGSSVSAALRHAEVDVPCRDVGLPQQFFDHASRGEVLADVGVTDRNISRQITGWVAALGATPADADEVSERLD.

Residues His-71 and 112-114 contribute to the thiamine diphosphate site; that span reads SHA. Position 144 (Asp-144) interacts with Mg(2+). Residues 145–146, Asn-173, Tyr-284, and Glu-365 each bind thiamine diphosphate; that span reads GA. Residue Asn-173 coordinates Mg(2+).

This sequence belongs to the transketolase family. DXPS subfamily. Homodimer. Mg(2+) serves as cofactor. Thiamine diphosphate is required as a cofactor.

It catalyses the reaction D-glyceraldehyde 3-phosphate + pyruvate + H(+) = 1-deoxy-D-xylulose 5-phosphate + CO2. The protein operates within metabolic intermediate biosynthesis; 1-deoxy-D-xylulose 5-phosphate biosynthesis; 1-deoxy-D-xylulose 5-phosphate from D-glyceraldehyde 3-phosphate and pyruvate: step 1/1. Its function is as follows. Catalyzes the acyloin condensation reaction between C atoms 2 and 3 of pyruvate and glyceraldehyde 3-phosphate to yield 1-deoxy-D-xylulose-5-phosphate (DXP). The chain is 1-deoxy-D-xylulose-5-phosphate synthase from Mycobacterium sp. (strain JLS).